We begin with the raw amino-acid sequence, 516 residues long: MSDDRKQIKRALISVYDKTGLEELARTLDSAGVEIVSTGSTAAKIADLGINVTPVESLTGFPECLEGRVKTLHPRVHAGILADTRKPDHLNQLEELEIEPFQLVVVNLYPFKETVASGADFDGCVEQIDIGGPSMVRAAAKNHPSVAVVVDPARYGDIAEAVAQGGFDLAQRRQLAATAFKHTADYDVAVSGWFAQQLADDSVASAELEGDALRYGENPHQQASIVREGTTGVANAKQLHGKEMSYNNYQDADAAWRAAWDHERPCVAIIKHANPCGIAVSDESIAAAHAAAHACDPMSAFGGVIAVNREVTKEMATQVADIFTEVIIAPSYEDGAVEILQGKKNIRILVAEHEVPAVEVKEISGGRLLQEADVYQAEGDKASSWTLAAGEAASEEKLAELEFAWRAVRSVKSNAILLAHEGATVGVGMGQVNRVDSAKLAVDRANTLADSAERARGSVAASDAFFPFADGLQVLIDAGVSAVVQPGGSIRDEEVIAAAEAAGITMYFTGTRHFAH.

In terms of domain architecture, MGS-like spans 1 to 150 (MSDDRKQIKR…KNHPSVAVVV (150 aa)).

Belongs to the PurH family.

It catalyses the reaction (6R)-10-formyltetrahydrofolate + 5-amino-1-(5-phospho-beta-D-ribosyl)imidazole-4-carboxamide = 5-formamido-1-(5-phospho-D-ribosyl)imidazole-4-carboxamide + (6S)-5,6,7,8-tetrahydrofolate. The catalysed reaction is IMP + H2O = 5-formamido-1-(5-phospho-D-ribosyl)imidazole-4-carboxamide. It participates in purine metabolism; IMP biosynthesis via de novo pathway; 5-formamido-1-(5-phospho-D-ribosyl)imidazole-4-carboxamide from 5-amino-1-(5-phospho-D-ribosyl)imidazole-4-carboxamide (10-formyl THF route): step 1/1. The protein operates within purine metabolism; IMP biosynthesis via de novo pathway; IMP from 5-formamido-1-(5-phospho-D-ribosyl)imidazole-4-carboxamide: step 1/1. In Corynebacterium ammoniagenes (Brevibacterium ammoniagenes), this protein is Bifunctional purine biosynthesis protein PurH.